We begin with the raw amino-acid sequence, 122 residues long: Large ribosomal subunit protein uL14 (122 aa).

This sequence belongs to the universal ribosomal protein uL14 family. In terms of assembly, part of the 50S ribosomal subunit. Forms a cluster with proteins L3 and L19. In the 70S ribosome, L14 and L19 interact and together make contacts with the 16S rRNA in bridges B5 and B8.

Functionally, binds to 23S rRNA. Forms part of two intersubunit bridges in the 70S ribosome. The chain is Large ribosomal subunit protein uL14 from Kineococcus radiotolerans (strain ATCC BAA-149 / DSM 14245 / SRS30216).